We begin with the raw amino-acid sequence, 145 residues long: MDVQIFPHRLLGADTTEKLLNRLEDISGVKRMVIHGQRLPPEDHPDRRIISVKGHEFELQVKTGRVLLEIEDEDTIADIKRVCEDLLPFGYDVTPGKYIRTQKTVTDEIKYGEDLDKVPEELIGLTDQNARLSERATIIKRKKEH.

As to quaternary structure, MCR is composed of three subunits: alpha, beta, and gamma. The function of proteins C and D is not known.

The protein is Methyl-coenzyme M reductase I operon protein D (mcrD) of Methanothermobacter thermautotrophicus (strain ATCC 29096 / DSM 1053 / JCM 10044 / NBRC 100330 / Delta H) (Methanobacterium thermoautotrophicum).